We begin with the raw amino-acid sequence, 510 residues long: NAD(P)H-quinone oxidoreductase subunit 2, chloroplastic (510 aa).

Transmembrane regions (helical) follow at residues 24 to 44 (LLLF…GLIL), 59 to 79 (WFYF…LFRW), 99 to 119 (IFQF…VEYI), 124 to 144 (MAIT…MFLC), 149 to 169 (LITI…LSGY), 183 to 203 (YLLM…WLYG), 295 to 315 (WHLL…LIAI), 323 to 343 (MLAY…IVGD), 347 to 367 (GYAS…GTFA), 395 to 415 (ALSS…AGFF), and 418 to 438 (LYLF…IGLL).

The protein belongs to the complex I subunit 2 family. As to quaternary structure, NDH is composed of at least 16 different subunits, 5 of which are encoded in the nucleus.

Its subcellular location is the plastid. It is found in the chloroplast thylakoid membrane. It catalyses the reaction a plastoquinone + NADH + (n+1) H(+)(in) = a plastoquinol + NAD(+) + n H(+)(out). It carries out the reaction a plastoquinone + NADPH + (n+1) H(+)(in) = a plastoquinol + NADP(+) + n H(+)(out). In terms of biological role, NDH shuttles electrons from NAD(P)H:plastoquinone, via FMN and iron-sulfur (Fe-S) centers, to quinones in the photosynthetic chain and possibly in a chloroplast respiratory chain. The immediate electron acceptor for the enzyme in this species is believed to be plastoquinone. Couples the redox reaction to proton translocation, and thus conserves the redox energy in a proton gradient. The polypeptide is NAD(P)H-quinone oxidoreductase subunit 2, chloroplastic (Asparagus officinalis (Garden asparagus)).